Consider the following 359-residue polypeptide: Mannose-1-phosphate guanylyltransferase (359 aa).

The protein belongs to the transferase hexapeptide repeat family.

It carries out the reaction alpha-D-mannose 1-phosphate + GTP + H(+) = GDP-alpha-D-mannose + diphosphate. The protein operates within cell wall biogenesis. Its pathway is nucleotide-sugar biosynthesis; GDP-alpha-D-mannose biosynthesis; GDP-alpha-D-mannose from alpha-D-mannose 1-phosphate (GTP route): step 1/1. Its function is as follows. Catalyzes the formation of GDP-mannose from D-mannose-1-phosphate and GTP. Plays an important role in the synthesis of different glycoconjugates which are responsible for cell wall structure, virulence and immunomodulatory activity of M.tuberculosis. The sequence is that of Mannose-1-phosphate guanylyltransferase from Mycobacterium tuberculosis (strain ATCC 25618 / H37Rv).